The chain runs to 122 residues: Large ribosomal subunit protein uL14 (122 aa).

It belongs to the universal ribosomal protein uL14 family. In terms of assembly, part of the 50S ribosomal subunit. Forms a cluster with proteins L3 and L19. In the 70S ribosome, L14 and L19 interact and together make contacts with the 16S rRNA in bridges B5 and B8.

Binds to 23S rRNA. Forms part of two intersubunit bridges in the 70S ribosome. This chain is Large ribosomal subunit protein uL14, found in Francisella philomiragia subsp. philomiragia (strain ATCC 25017 / CCUG 19701 / FSC 153 / O#319-036).